The sequence spans 279 residues: Ribosomal RNA small subunit methyltransferase J (279 aa).

S-adenosyl-L-methionine is bound by residues 138-139 and Asp194; that span reads ER.

This sequence belongs to the methyltransferase superfamily. RsmJ family.

The protein resides in the cytoplasm. It catalyses the reaction guanosine(1516) in 16S rRNA + S-adenosyl-L-methionine = N(2)-methylguanosine(1516) in 16S rRNA + S-adenosyl-L-homocysteine + H(+). Its function is as follows. Specifically methylates the guanosine in position 1516 of 16S rRNA. This Acinetobacter baumannii (strain ATCC 17978 / DSM 105126 / CIP 53.77 / LMG 1025 / NCDC KC755 / 5377) protein is Ribosomal RNA small subunit methyltransferase J.